Consider the following 261-residue polypeptide: Acyl-[acyl-carrier-protein]--UDP-N-acetylglucosamine O-acyltransferase (261 aa).

This sequence belongs to the transferase hexapeptide repeat family. LpxA subfamily. As to quaternary structure, homotrimer.

The protein resides in the cytoplasm. It carries out the reaction a (3R)-hydroxyacyl-[ACP] + UDP-N-acetyl-alpha-D-glucosamine = a UDP-3-O-[(3R)-3-hydroxyacyl]-N-acetyl-alpha-D-glucosamine + holo-[ACP]. Its pathway is glycolipid biosynthesis; lipid IV(A) biosynthesis; lipid IV(A) from (3R)-3-hydroxytetradecanoyl-[acyl-carrier-protein] and UDP-N-acetyl-alpha-D-glucosamine: step 1/6. Its function is as follows. Involved in the biosynthesis of lipid A, a phosphorylated glycolipid that anchors the lipopolysaccharide to the outer membrane of the cell. The protein is Acyl-[acyl-carrier-protein]--UDP-N-acetylglucosamine O-acyltransferase of Trichlorobacter lovleyi (strain ATCC BAA-1151 / DSM 17278 / SZ) (Geobacter lovleyi).